The sequence spans 352 residues: Maleylacetate reductase (352 aa).

Belongs to the iron-containing alcohol dehydrogenase family.

It carries out the reaction 3-oxoadipate + NAD(+) = maleylacetate + NADH + H(+). The catalysed reaction is 3-oxoadipate + NADP(+) = maleylacetate + NADPH + H(+). The protein operates within aromatic compound metabolism; 3-chlorocatechol degradation. The protein is Maleylacetate reductase (clcE) of Pseudomonas aeruginosa.